Consider the following 611-residue polypeptide: Phosphomethylpyrimidine synthase (611 aa).

Substrate contacts are provided by residues N218, M247, Y276, H312, 332–334 (SRG), 373–376 (DGLR), and E412. A Zn(2+)-binding site is contributed by H416. Position 439 (Y439) interacts with substrate. Residue H480 coordinates Zn(2+). C560, C563, and C568 together coordinate [4Fe-4S] cluster.

The protein belongs to the ThiC family. As to quaternary structure, homodimer. The cofactor is [4Fe-4S] cluster.

The enzyme catalyses 5-amino-1-(5-phospho-beta-D-ribosyl)imidazole + S-adenosyl-L-methionine = 4-amino-2-methyl-5-(phosphooxymethyl)pyrimidine + CO + 5'-deoxyadenosine + formate + L-methionine + 3 H(+). Its pathway is cofactor biosynthesis; thiamine diphosphate biosynthesis. In terms of biological role, catalyzes the synthesis of the hydroxymethylpyrimidine phosphate (HMP-P) moiety of thiamine from aminoimidazole ribotide (AIR) in a radical S-adenosyl-L-methionine (SAM)-dependent reaction. The polypeptide is Phosphomethylpyrimidine synthase (Caulobacter sp. (strain K31)).